The sequence spans 221 residues: Oxaloacetate tautomerase oaa1, mitochondrial (221 aa).

Residues E59, E61, and D93 each coordinate Mg(2+).

The protein belongs to the FAH family. The cofactor is Mg(2+). Mn(2+) serves as cofactor.

Its subcellular location is the mitochondrion. It localises to the cytoplasm. It catalyses the reaction oxaloacetate = enol-oxaloacetate. Its function is as follows. Tautomerase that converts enol-oxaloacetate, a strong inhibitor of succinate dehydrogenase, to the physiological keto form of oxaloacetate. The chain is Oxaloacetate tautomerase oaa1, mitochondrial from Schizosaccharomyces pombe (strain 972 / ATCC 24843) (Fission yeast).